Consider the following 167-residue polypeptide: Signal peptidase complex catalytic subunit SEC11 (167 aa).

The Cytoplasmic portion of the chain corresponds to 1 to 12 (MNLRLELTRFLK). Residues 13–30 (LCFVLSSAFMFWKGLSIA) form a helical; Signal-anchor for type II membrane protein membrane-spanning segment. Residues 31 to 167 (TNSHSPIVVV…LGISALLSNE (137 aa)) lie on the Lumenal side of the membrane. Catalysis depends on charge relay system residues S44, H83, and D109. The tract at residues 153–164 (ALMGFLGISALL) is C-terminal short (CTS) helix.

The protein belongs to the peptidase S26B family. In terms of assembly, component of the signal peptidase complex (SPC) composed of a catalytic subunit SEC11 and three accessory subunits SPC1, SPC2 and SPC3. The complex induces a local thinning of the ER membrane which is used to measure the length of the signal peptide (SP) h-region of protein substrates. This ensures the selectivity of the complex towards h-regions shorter than 18-20 amino acids. SPC associates with the translocon complex.

Its subcellular location is the endoplasmic reticulum membrane. It carries out the reaction Cleavage of hydrophobic, N-terminal signal or leader sequences from secreted and periplasmic proteins.. Catalytic component of the signal peptidase complex (SPC) which catalyzes the cleavage of N-terminal signal sequences from nascent proteins as they are translocated into the lumen of the endoplasmic reticulum. Specifically cleaves N-terminal signal peptides that contain a hydrophobic alpha-helix (h-region) shorter than 18-20 amino acids. The sequence is that of Signal peptidase complex catalytic subunit SEC11 (SEC11) from Zygosaccharomyces rouxii (strain ATCC 2623 / CBS 732 / NBRC 1130 / NCYC 568 / NRRL Y-229).